Consider the following 541-residue polypeptide: Chaperonin GroEL 1 (541 aa).

Residues 30 to 33 (TLGP), 87 to 91 (DGTTT), G414, 478 to 480 (NAA), and D494 each bind ATP.

Belongs to the chaperonin (HSP60) family. In terms of assembly, forms a cylinder of 14 subunits composed of two heptameric rings stacked back-to-back. Interacts with the co-chaperonin GroES.

It localises to the cytoplasm. The enzyme catalyses ATP + H2O + a folded polypeptide = ADP + phosphate + an unfolded polypeptide.. Together with its co-chaperonin GroES, plays an essential role in assisting protein folding. The GroEL-GroES system forms a nano-cage that allows encapsulation of the non-native substrate proteins and provides a physical environment optimized to promote and accelerate protein folding. The sequence is that of Chaperonin GroEL 1 from Thermobifida fusca (strain YX).